Reading from the N-terminus, the 414-residue chain is Tyrosine--tRNA ligase (414 aa).

Y38 serves as a coordination point for L-tyrosine. The 'HIGH' region signature appears at 43 to 52 (CTARSLHIGS). Y172 and Q176 together coordinate L-tyrosine. Positions 232 to 236 (KMGKT) match the 'KMSKS' region motif. Residue K235 coordinates ATP. Positions 345–412 (ISVAKLLQLA…GKKRRIKVVV (68 aa)) constitute an S4 RNA-binding domain.

Belongs to the class-I aminoacyl-tRNA synthetase family. TyrS type 1 subfamily. Homodimer.

It is found in the cytoplasm. It carries out the reaction tRNA(Tyr) + L-tyrosine + ATP = L-tyrosyl-tRNA(Tyr) + AMP + diphosphate + H(+). In terms of biological role, catalyzes the attachment of tyrosine to tRNA(Tyr) in a two-step reaction: tyrosine is first activated by ATP to form Tyr-AMP and then transferred to the acceptor end of tRNA(Tyr). The protein is Tyrosine--tRNA ligase of Anaplasma marginale (strain St. Maries).